The primary structure comprises 378 residues: DNA replication and repair protein RecF (378 aa).

31 to 38 (GENGSGKT) is an ATP binding site.

This sequence belongs to the RecF family.

The protein resides in the cytoplasm. Functionally, the RecF protein is involved in DNA metabolism; it is required for DNA replication and normal SOS inducibility. RecF binds preferentially to single-stranded, linear DNA. It also seems to bind ATP. This is DNA replication and repair protein RecF from Teredinibacter turnerae (strain ATCC 39867 / T7901).